A 591-amino-acid polypeptide reads, in one-letter code: MDQDQHPQYGIPELRQLMKGGGRTTTTTPSTSSHFPSDFFGFNLAPVQPPPHRLHQFTTDQDMGFLPRGIHGLGGGSSTAGNNSNLNASTSGGGVGFSGFLDGGGFGSGVGGDGGGTGRWPRQETLTLLEIRSRLDHKFKEANQKGPLWDEVSRIMSEEHGYQRSGKKCREKFENLYKYYRKTKEGKAGRQDGKHYRFFRQLEALYGDSNNLVSCPNHNTQFMSSALHGFHTQNPMNVTTTTSNIHNVDSVHGFHQSLSLSNNYNSSELELMTSSSEGNDSSSRRKKRSWKAKIKEFIDTNMKRLIERQDVWLEKLTKVIEDKEEQRMMKEEEWRKIEAARIDKEHLFWAKERARMEARDVAVIEALQYLTGKPLIKPLCSSPEERTNGNNEIRNNSETQNENGSDQTMTNNVCVKGSSSCWGEQEILKLMEIRTSMDSTFQEILGGCSDEFLWEEIAAKLIQLGFDQRSALLCKEKWEWISNGMRKEKKQINKKRKDNSSSCGVYYPRNEENPIYNNRESGYNDNDPHQINEQGNVGSSTSNANANANVTTGNPSGAMAASTNCFPFFMGDGDQNLWESYGLRLSKEENQ.

The tract at residues 1–32 is disordered; the sequence is MDQDQHPQYGIPELRQLMKGGGRTTTTTPSTS. Positions 118 to 177 constitute a Myb-like 1 domain; it reads GRWPRQETLTLLEIRSRLDHKFKEANQKGPLWDEVSRIMSEEHGYQRSGKKCREKFENLY. The segment at 380–410 is disordered; sequence CSSPEERTNGNNEIRNNSETQNENGSDQTMT. A compositionally biased stretch (polar residues) spans 388–410; sequence NGNNEIRNNSETQNENGSDQTMT. A Myb-like 2 domain is found at 422–479; the sequence is WGEQEILKLMEIRTSMDSTFQEILGGCSDEFLWEEIAAKLIQLGFDQRSALLCKEKWE. The disordered stretch occupies residues 491–551; the sequence is QINKKRKDNS…SNANANANVT (61 aa). Positions 515 to 534 are enriched in polar residues; sequence IYNNRESGYNDNDPHQINEQ. Residues 535–551 are compositionally biased toward low complexity; sequence GNVGSSTSNANANANVT.

In terms of assembly, interacts with KIN10. As to expression, confined to flowers, at low levels. Also present in 7-days-old seedlings. Barely detectable in other tissues such as young seedlings, roots, stems, leaves and siliques. Expressed in flower primordia, more precisely between newly arisen sepal primordia and also at the basal margins of developing sepals.

The protein localises to the nucleus. In terms of biological role, transcription factor that prevents growth. Regulates perianth architecture in flower, mostly in the second whorl, probably by suppressing growth between initiating sepals, ensuring that they remain separate, and by modulating organ shapes. Required for the establishment of auxin flux. In Arabidopsis thaliana (Mouse-ear cress), this protein is Trihelix transcription factor PTL (PTL).